A 308-amino-acid polypeptide reads, in one-letter code: Methionyl-tRNA formyltransferase (308 aa).

109-112 contributes to the (6S)-5,6,7,8-tetrahydrofolate binding site; that stretch reads SLLP.

It belongs to the Fmt family.

The enzyme catalyses L-methionyl-tRNA(fMet) + (6R)-10-formyltetrahydrofolate = N-formyl-L-methionyl-tRNA(fMet) + (6S)-5,6,7,8-tetrahydrofolate + H(+). Attaches a formyl group to the free amino group of methionyl-tRNA(fMet). The formyl group appears to play a dual role in the initiator identity of N-formylmethionyl-tRNA by promoting its recognition by IF2 and preventing the misappropriation of this tRNA by the elongation apparatus. This is Methionyl-tRNA formyltransferase from Salinispora arenicola (strain CNS-205).